The primary structure comprises 735 residues: 1,4-alpha-glucan branching enzyme GlgB (735 aa).

Residue D414 is the Nucleophile of the active site. E469 functions as the Proton donor in the catalytic mechanism.

This sequence belongs to the glycosyl hydrolase 13 family. GlgB subfamily. In terms of assembly, monomer.

It carries out the reaction Transfers a segment of a (1-&gt;4)-alpha-D-glucan chain to a primary hydroxy group in a similar glucan chain.. The protein operates within glycan biosynthesis; glycogen biosynthesis. Catalyzes the formation of the alpha-1,6-glucosidic linkages in glycogen by scission of a 1,4-alpha-linked oligosaccharide from growing alpha-1,4-glucan chains and the subsequent attachment of the oligosaccharide to the alpha-1,6 position. The polypeptide is 1,4-alpha-glucan branching enzyme GlgB (Burkholderia lata (strain ATCC 17760 / DSM 23089 / LMG 22485 / NCIMB 9086 / R18194 / 383)).